The following is a 154-amino-acid chain: Neurotrophin-3 (154 aa).

An N-terminal signal peptide occupies residues 1-18 (MSILFYVMFLAYLRGVQG). Residues 19-134 (NSMDQRSLPE…VNSRSPRRKR (116 aa)) constitute a propeptide that is removed on maturation.

Belongs to the NGF-beta family.

The protein resides in the secreted. In terms of biological role, seems to promote the survival of visceral and proprioceptive sensory neurons. This is Neurotrophin-3 (NTF3) from Cervus elaphus (Red deer).